The sequence spans 498 residues: ATP synthase subunit beta, chloroplastic (498 aa).

Residue 172–179 (GGAGVGKT) participates in ATP binding.

It belongs to the ATPase alpha/beta chains family. In terms of assembly, F-type ATPases have 2 components, CF(1) - the catalytic core - and CF(0) - the membrane proton channel. CF(1) has five subunits: alpha(3), beta(3), gamma(1), delta(1), epsilon(1). CF(0) has four main subunits: a(1), b(1), b'(1) and c(9-12).

The protein localises to the plastid. The protein resides in the chloroplast thylakoid membrane. The enzyme catalyses ATP + H2O + 4 H(+)(in) = ADP + phosphate + 5 H(+)(out). Functionally, produces ATP from ADP in the presence of a proton gradient across the membrane. The catalytic sites are hosted primarily by the beta subunits. This is ATP synthase subunit beta, chloroplastic from Buxus microphylla (Littleleaf boxwood).